We begin with the raw amino-acid sequence, 433 residues long: MGQNFSKKSGNDLVSRIVFTILILIVCRFGSFIPIPGIDSIALSSVAAQNQSGILGMFNMLSGGSLGRMSIFALAIMPYITASIIIQLMSVAYKPLENLKKEGEVGKRKVNQLSRYLTVLLASFQAYGVAISLESIVTNTGPVVILAGFFFRITTVITLVVGTMLLMWLGEQITQRGIGNGTSLIIFIGIISGVPSAIISMFELSRKGALSPLIAIAVCIGVVVLIAIIIFFERAQRKLLVQYPKRQVGNKIYGGEATHMPLKLNTSGVIPPIFASSILLFPATLANFSNSNSETMGMLTYYLGHGKPVYILLYVALIMFFSFFYTAIVFNSEETANNLRKYGAYIPGKRPGKNTSDYFDYILTRLTVIGGIYLSVICVIPELLMNKYVISLSLGGTSFLIVVNVVLDTMTQIQTYLFSSKYEGLMKKVKLKN.

Helical transmembrane passes span 17–37, 71–91, 117–137, 141–161, 184–204, 212–232, 268–288, 310–330, 366–386, and 388–408; these read IVFT…PIPG, IFAL…LMSV, LTVL…ESIV, GPVV…TLVV, LIIF…MFEL, PLIA…IIFF, GVIP…LANF, YILL…AIVF, LTVI…LLMN, and YVIS…VVLD.

Belongs to the SecY/SEC61-alpha family. Component of the Sec protein translocase complex. Heterotrimer consisting of SecY, SecE and SecG subunits. The heterotrimers can form oligomers, although 1 heterotrimer is thought to be able to translocate proteins. Interacts with the ribosome. Interacts with SecDF, and other proteins may be involved. Interacts with SecA.

It is found in the cell inner membrane. Its function is as follows. The central subunit of the protein translocation channel SecYEG. Consists of two halves formed by TMs 1-5 and 6-10. These two domains form a lateral gate at the front which open onto the bilayer between TMs 2 and 7, and are clamped together by SecE at the back. The channel is closed by both a pore ring composed of hydrophobic SecY resides and a short helix (helix 2A) on the extracellular side of the membrane which forms a plug. The plug probably moves laterally to allow the channel to open. The ring and the pore may move independently. This chain is Protein translocase subunit SecY, found in Rickettsia conorii (strain ATCC VR-613 / Malish 7).